The primary structure comprises 390 residues: 4-hydroxycoumarin synthase 1 (390 aa).

Cys-161 is a catalytic residue.

This sequence belongs to the thiolase-like superfamily. Chalcone/stilbene synthases family. Homodimer.

It carries out the reaction 2-hydroxybenzoyl-CoA + malonyl-CoA = 4-hydroxycoumarin + CO2 + 2 CoA. Its function is as follows. Type III polyketide synthase involved preferentially in the biosynthesis of 4-hydroxycoumarin from salicoyl-CoA. Can also use benzoyl-CoA and malonyl-CoA to produce 3,5-dihydroxybiphenyl as a major product and benzoyldiacetic acid lactone as a minor side product. Can also use m-hydroxybenzoyl-CoA as substrate, producing m-hydroxybenzoyl diacetic acid lactone as a derailment product. No activity with p-hydroxybenzoyl-CoA, CoA-linked cinnamic acids or acetyl-CoA. The protein is 4-hydroxycoumarin synthase 1 (BIS2) of Sorbus aucuparia (European mountain ash).